Consider the following 338-residue polypeptide: Ketol-acid reductoisomerase (NADP(+)) (338 aa).

Positions 1-181 (MKVFYDKDAD…GGGRAGIIET (181 aa)) constitute a KARI N-terminal Rossmann domain. NADP(+)-binding positions include 24-27 (YGSQ), Arg-47, and Ser-52. His-107 is an active-site residue. Gly-133 contacts NADP(+). The 146-residue stretch at 182 to 327 (NFREETETDL…SKLRAMMPWI (146 aa)) folds into the KARI C-terminal knotted domain. Asp-190, Glu-194, Glu-226, and Glu-230 together coordinate Mg(2+). Ser-251 contacts substrate.

It belongs to the ketol-acid reductoisomerase family. It depends on Mg(2+) as a cofactor.

It catalyses the reaction (2R)-2,3-dihydroxy-3-methylbutanoate + NADP(+) = (2S)-2-acetolactate + NADPH + H(+). It carries out the reaction (2R,3R)-2,3-dihydroxy-3-methylpentanoate + NADP(+) = (S)-2-ethyl-2-hydroxy-3-oxobutanoate + NADPH + H(+). It functions in the pathway amino-acid biosynthesis; L-isoleucine biosynthesis; L-isoleucine from 2-oxobutanoate: step 2/4. The protein operates within amino-acid biosynthesis; L-valine biosynthesis; L-valine from pyruvate: step 2/4. Its function is as follows. Involved in the biosynthesis of branched-chain amino acids (BCAA). Catalyzes an alkyl-migration followed by a ketol-acid reduction of (S)-2-acetolactate (S2AL) to yield (R)-2,3-dihydroxy-isovalerate. In the isomerase reaction, S2AL is rearranged via a Mg-dependent methyl migration to produce 3-hydroxy-3-methyl-2-ketobutyrate (HMKB). In the reductase reaction, this 2-ketoacid undergoes a metal-dependent reduction by NADPH to yield (R)-2,3-dihydroxy-isovalerate. The protein is Ketol-acid reductoisomerase (NADP(+)) of Burkholderia mallei (strain NCTC 10229).